We begin with the raw amino-acid sequence, 412 residues long: Divalent metal cation transporter MntH (412 aa).

The next 11 membrane-spanning stretches (helical) occupy residues 19 to 39 (LALMGPAFIAAIGYIDPGNFA), 46 to 66 (ASFGYQLLWVVVWANLMAMLI), 94 to 114 (VWFYWVQAEIIAMATDLAEFI), 122 to 142 (LILGVSLLQGAVLTGIATFLI), 156 to 176 (VIGGLLLFVAAAYIVELFFSQ), 196 to 216 (AVFLAAGVLGATIMPHVIYLH), 241 to 261 (IAMTIAGFVNLAMMATAAAAF), 290 to 310 (IFGLSLVAAGLSSTVVGTLAG), 322 to 342 (IPLWVRRAVTMAPSFIVILMG), 348 to 368 (ILVMSQVLLSFGIALALVPLL), and 392 to 412 (AIVVLVVALNIWLLVGTALGL).

Belongs to the NRAMP family.

Its subcellular location is the cell inner membrane. Its function is as follows. H(+)-stimulated, divalent metal cation uptake system. This Cronobacter sakazakii (strain ATCC BAA-894) (Enterobacter sakazakii) protein is Divalent metal cation transporter MntH.